Reading from the N-terminus, the 214-residue chain is Pyridoxine/pyridoxamine 5'-phosphate oxidase (214 aa).

Residues 9–12 and lysine 67 each bind substrate; that span reads RKNY. Residues 62 to 67, 77 to 78, lysine 83, lysine 84, and glutamine 106 contribute to the FMN site; these read RIVLLK and YT. The substrate site is built by tyrosine 124, arginine 128, and serine 132. Residues 141 to 142 and tryptophan 186 contribute to the FMN site; that span reads QS. 192-194 contributes to the substrate binding site; the sequence is RLH. Arginine 196 serves as a coordination point for FMN.

Belongs to the pyridoxamine 5'-phosphate oxidase family. As to quaternary structure, homodimer. Requires FMN as cofactor.

The enzyme catalyses pyridoxamine 5'-phosphate + O2 + H2O = pyridoxal 5'-phosphate + H2O2 + NH4(+). The catalysed reaction is pyridoxine 5'-phosphate + O2 = pyridoxal 5'-phosphate + H2O2. The protein operates within cofactor metabolism; pyridoxal 5'-phosphate salvage; pyridoxal 5'-phosphate from pyridoxamine 5'-phosphate: step 1/1. It functions in the pathway cofactor metabolism; pyridoxal 5'-phosphate salvage; pyridoxal 5'-phosphate from pyridoxine 5'-phosphate: step 1/1. Catalyzes the oxidation of either pyridoxine 5'-phosphate (PNP) or pyridoxamine 5'-phosphate (PMP) into pyridoxal 5'-phosphate (PLP). The sequence is that of Pyridoxine/pyridoxamine 5'-phosphate oxidase from Leptospira borgpetersenii serovar Hardjo-bovis (strain JB197).